Reading from the N-terminus, the 287-residue chain is Urease accessory protein UreD (287 aa).

It belongs to the UreD family. UreD, UreF and UreG form a complex that acts as a GTP-hydrolysis-dependent molecular chaperone, activating the urease apoprotein by helping to assemble the nickel containing metallocenter of UreC. The UreE protein probably delivers the nickel.

The protein resides in the cytoplasm. Its function is as follows. Required for maturation of urease via the functional incorporation of the urease nickel metallocenter. This Ureaplasma parvum serovar 3 (strain ATCC 27815 / 27 / NCTC 11736) protein is Urease accessory protein UreD.